A 243-amino-acid chain; its full sequence is Dirigent protein 16 (243 aa).

The N-terminal stretch at 1 to 24 is a signal peptide; it reads MMIKQSPFLLLTTILFTVAVFVAA.

Belongs to the plant dirigent protein family. In terms of assembly, homodimer.

It localises to the secreted. Its subcellular location is the extracellular space. It is found in the apoplast. In terms of biological role, dirigent proteins impart stereoselectivity on the phenoxy radical-coupling reaction, yielding optically active lignans from two molecules of coniferyl alcohol in the biosynthesis of lignans, flavonolignans, and alkaloids and thus plays a central role in plant secondary metabolism. This is Dirigent protein 16 (DIR16) from Arabidopsis thaliana (Mouse-ear cress).